The sequence spans 288 residues: Pantothenate synthetase (288 aa).

Met-30 to His-37 provides a ligand contact to ATP. His-37 (proton donor) is an active-site residue. Position 61 (Gln-61) interacts with (R)-pantoate. Gln-61 is a binding site for beta-alanine. Gly-147–Asp-150 contacts ATP. Gln-153 serves as a coordination point for (R)-pantoate. ATP is bound by residues Val-176 and Lys-184–Arg-187.

This sequence belongs to the pantothenate synthetase family. Homodimer.

It is found in the cytoplasm. The catalysed reaction is (R)-pantoate + beta-alanine + ATP = (R)-pantothenate + AMP + diphosphate + H(+). It participates in cofactor biosynthesis; (R)-pantothenate biosynthesis; (R)-pantothenate from (R)-pantoate and beta-alanine: step 1/1. In terms of biological role, catalyzes the condensation of pantoate with beta-alanine in an ATP-dependent reaction via a pantoyl-adenylate intermediate. The protein is Pantothenate synthetase of Bacillus pumilus (strain SAFR-032).